We begin with the raw amino-acid sequence, 404 residues long: E3 ubiquitin-protein ligase RNF128 (404 aa).

The N-terminal stretch at 1–31 (MGALKMRCQCFPLPYLSLLALLLLNLSLTRA) is a signal peptide. The PA domain maps to 62–166 (DSPIERAAGL…LKGNEIVDLI (105 aa)). A helical transmembrane segment spans residues 191–211 (IFFVSVSFFIVTAATVGYFIF). Residues 260–301 (CAVCIEPYKPSDVVRILTCNHFFHKNCIDPWLLEHRTCPMCK) form an RING-type; atypical zinc finger. Residues 336-356 (ITEEENHSETASSGYASVRGG) are disordered.

Auto-ubiquitinated. In terms of tissue distribution, expressed in the cement gland, cranial placodes, and the pronephros.

Its subcellular location is the endomembrane system. It is found in the cytoplasm. The protein resides in the perinuclear region. It catalyses the reaction S-ubiquitinyl-[E2 ubiquitin-conjugating enzyme]-L-cysteine + [acceptor protein]-L-lysine = [E2 ubiquitin-conjugating enzyme]-L-cysteine + N(6)-ubiquitinyl-[acceptor protein]-L-lysine.. It participates in protein modification; protein ubiquitination. Its function is as follows. E3 ubiquitin-protein ligase that catalyzes polyubiquitin chains. Converts epidermis into cement gland and neural tissue in whole embryos. In Xenopus laevis (African clawed frog), this protein is E3 ubiquitin-protein ligase RNF128 (rnf128).